The chain runs to 136 residues: MTYLRIALASNKRKGSFVLRNSMAALSLSTSGFKFLLAYSSARAIFKLFANCKWAGCFFDLSKEMRKDMLVVNFRFFFKFYSSTKMHIRKQIIINIRHRRKFVIVFFFFSFSLSISCVQKFFLPPKSFVPRDIEKK.

A helical membrane pass occupies residues 102 to 118 (FVIVFFFFSFSLSISCV).

It is found in the membrane. This is an uncharacterized protein from Saccharomyces cerevisiae (strain ATCC 204508 / S288c) (Baker's yeast).